The primary structure comprises 150 residues: Large ribosomal subunit protein eL19 (150 aa).

Residues 56 to 89 (KGQSRARARAFQEARKKGRHRGPGSKKGKKTARM) are disordered. A compositionally biased stretch (basic residues) spans 71–89 (KKGRHRGPGSKKGKKTARM).

This sequence belongs to the eukaryotic ribosomal protein eL19 family. In terms of assembly, part of the 50S ribosomal subunit.

Binds to the 23S rRNA. This chain is Large ribosomal subunit protein eL19, found in Thermococcus kodakarensis (strain ATCC BAA-918 / JCM 12380 / KOD1) (Pyrococcus kodakaraensis (strain KOD1)).